The primary structure comprises 303 residues: Oxygen-dependent coproporphyrinogen-III oxidase (303 aa).

Residue serine 94 coordinates substrate. A divalent metal cation-binding residues include histidine 98 and histidine 108. Catalysis depends on histidine 108, which acts as the Proton donor. A substrate-binding site is contributed by 110–112; that stretch reads NVR. Histidine 147 and histidine 177 together coordinate a divalent metal cation. Residues 242–277 form an important for dimerization region; that stretch reads YVEFNLVYDRGTLFGLQTGGRTESILMSLPPLVRWE. 260–262 serves as a coordination point for substrate; it reads GGR.

Belongs to the aerobic coproporphyrinogen-III oxidase family. As to quaternary structure, homodimer. A divalent metal cation serves as cofactor.

It localises to the cytoplasm. It carries out the reaction coproporphyrinogen III + O2 + 2 H(+) = protoporphyrinogen IX + 2 CO2 + 2 H2O. It functions in the pathway porphyrin-containing compound metabolism; protoporphyrin-IX biosynthesis; protoporphyrinogen-IX from coproporphyrinogen-III (O2 route): step 1/1. Its function is as follows. Involved in the heme biosynthesis. Catalyzes the aerobic oxidative decarboxylation of propionate groups of rings A and B of coproporphyrinogen-III to yield the vinyl groups in protoporphyrinogen-IX. This Saccharophagus degradans (strain 2-40 / ATCC 43961 / DSM 17024) protein is Oxygen-dependent coproporphyrinogen-III oxidase.